We begin with the raw amino-acid sequence, 572 residues long: Glypican-5 (572 aa).

The first 24 residues, 1 to 24, serve as a signal peptide directing secretion; sequence MDAQTWPVGFRCLLLLALVGSARS. N-linked (GlcNAc...) asparagine glycans are attached at residues N120 and N237. Residues 355–375 form a disordered region; it reads SPRCSFDQSKEKHGMKTTTRN. 5 O-linked (Xyl...) (glycosaminoglycan) serine glycosylation sites follow: S441, S486, S495, S507, and S509. N-linked (GlcNAc...) asparagine glycosylation occurs at N527.

Belongs to the glypican family. In terms of tissue distribution, in adult, primarily expressed in the brain. Also detected in fetal brain, lung and liver.

It is found in the cell membrane. Its subcellular location is the secreted. The protein resides in the extracellular space. Its function is as follows. Cell surface proteoglycan that bears heparan sulfate. The protein is Glypican-5 (GPC5) of Homo sapiens (Human).